Reading from the N-terminus, the 549-residue chain is CTP synthase (549 aa).

An amidoligase domain region spans residues 1–267 (MAKFVFITGG…CREVLDVLNL (267 aa)). Ser-13 contacts CTP. Ser-13 is a binding site for UTP. Residues 14-19 (SIGKGI) and Asp-71 contribute to the ATP site. Mg(2+) contacts are provided by Asp-71 and Glu-141. CTP contacts are provided by residues 148–150 (DIE), 188–193 (KTKPTQ), and Lys-224. Residues 188–193 (KTKPTQ) and Lys-224 each bind UTP. Residues 292–534 (KIALVGKYVQ…IEAAQQRLPD (243 aa)) form the Glutamine amidotransferase type-1 domain. L-glutamine is bound at residue Gly-354. The Nucleophile; for glutamine hydrolysis role is filled by Cys-381. L-glutamine contacts are provided by residues 382–385 (LGMQ), Glu-405, and Arg-462. Catalysis depends on residues His-507 and Glu-509.

Belongs to the CTP synthase family. In terms of assembly, homotetramer.

The catalysed reaction is UTP + L-glutamine + ATP + H2O = CTP + L-glutamate + ADP + phosphate + 2 H(+). The enzyme catalyses L-glutamine + H2O = L-glutamate + NH4(+). It catalyses the reaction UTP + NH4(+) + ATP = CTP + ADP + phosphate + 2 H(+). It functions in the pathway pyrimidine metabolism; CTP biosynthesis via de novo pathway; CTP from UDP: step 2/2. With respect to regulation, allosterically activated by GTP, when glutamine is the substrate; GTP has no effect on the reaction when ammonia is the substrate. The allosteric effector GTP functions by stabilizing the protein conformation that binds the tetrahedral intermediate(s) formed during glutamine hydrolysis. Inhibited by the product CTP, via allosteric rather than competitive inhibition. In terms of biological role, catalyzes the ATP-dependent amination of UTP to CTP with either L-glutamine or ammonia as the source of nitrogen. Regulates intracellular CTP levels through interactions with the four ribonucleotide triphosphates. The sequence is that of CTP synthase from Synechococcus sp. (strain CC9605).